Reading from the N-terminus, the 72-residue chain is uncharacterized protein (72 aa).

The protein resides in the cytoplasm. Its subcellular location is the nucleus. This is an uncharacterized protein from Saccharomyces cerevisiae (strain ATCC 204508 / S288c) (Baker's yeast).